Consider the following 41-residue polypeptide: Large ribosomal subunit protein bL36 (41 aa).

The protein belongs to the bacterial ribosomal protein bL36 family.

This chain is Large ribosomal subunit protein bL36, found in Rickettsia massiliae (strain Mtu5).